Reading from the N-terminus, the 219-residue chain is Occludin/ELL domain-containing protein 1 (219 aa).

Positions 1–110 are disordered; sequence MQIHAGPASR…DYELKYPPVT (110 aa). Residues 17–43 are compositionally biased toward low complexity; that stretch reads LARLSGPEATCNSRPAARGRQRAAAPR. A compositionally biased stretch (basic and acidic residues) spans 72 to 93; sequence VFADELRPREPLHPEKHPRDLG. Positions 100 to 210 constitute an OCEL domain; it reads PDYELKYPPV…QIRKFDDQQD (111 aa).

It belongs to the ELL/occludin family.

This Mus musculus (Mouse) protein is Occludin/ELL domain-containing protein 1 (Ocel1).